Consider the following 245-residue polypeptide: Orotidine 5'-phosphate decarboxylase (245 aa).

Substrate-binding positions include Asp22, Lys44, 71-80 (DLKFHDIPNT), Thr131, Arg192, Gln201, Gly221, and Arg222. Lys73 functions as the Proton donor in the catalytic mechanism.

It belongs to the OMP decarboxylase family. Type 1 subfamily. Homodimer.

It carries out the reaction orotidine 5'-phosphate + H(+) = UMP + CO2. The protein operates within pyrimidine metabolism; UMP biosynthesis via de novo pathway; UMP from orotate: step 2/2. Its function is as follows. Catalyzes the decarboxylation of orotidine 5'-monophosphate (OMP) to uridine 5'-monophosphate (UMP). This chain is Orotidine 5'-phosphate decarboxylase, found in Klebsiella pneumoniae (strain 342).